Here is a 552-residue protein sequence, read N- to C-terminus: Esterase E4 (552 aa).

The first 23 residues, 1–23, serve as a signal peptide directing secretion; the sequence is MKNTCGILLNLFLFIGCFLTCSA. An N-linked (GlcNAc...) asparagine glycan is attached at N81. C89 and C106 form a disulfide bridge. The Acyl-ester intermediate role is filled by S214. An intrachain disulfide couples C266 to C277. An N-linked (GlcNAc...) asparagine glycan is attached at N269. E339 functions as the Charge relay system in the catalytic mechanism. N371, N404, and N443 each carry an N-linked (GlcNAc...) asparagine glycan. The active-site Charge relay system is the H463.

It belongs to the type-B carboxylesterase/lipase family.

It catalyses the reaction a carboxylic ester + H2O = an alcohol + a carboxylate + H(+). Overproduction of nonspecific esterases is a common mechanism of resistance to organophosphate insecticides. This Myzus persicae (Green peach aphid) protein is Esterase E4.